The chain runs to 92 residues: Transcriptional regulator WhiB1 (92 aa).

The region spanning 12 to 74 (ACRDKDPELF…GGLSEDERRA (63 aa)) is the 4Fe-4S Wbl-type domain. [4Fe-4S] cluster is bound by residues cysteine 13, cysteine 41, cysteine 44, and cysteine 50.

Belongs to the WhiB family. The cofactor is [4Fe-4S] cluster. The Fe-S cluster can be nitrosylated by nitric oxide (NO). In terms of processing, upon Fe-S cluster removal intramolecular disulfide bonds are formed.

The protein resides in the cytoplasm. Functionally, acts as a transcriptional regulator. Probably redox-responsive. The apo- but not holo-form probably binds DNA. This is Transcriptional regulator WhiB1 (whiB1) from Bifidobacterium longum (strain NCC 2705).